A 114-amino-acid polypeptide reads, in one-letter code: Large ribosomal subunit protein bL20c (114 aa).

Belongs to the bacterial ribosomal protein bL20 family.

The protein localises to the plastid. Binds directly to 23S ribosomal RNA and is necessary for the in vitro assembly process of the 50S ribosomal subunit. It is not involved in the protein synthesizing functions of that subunit. This is Large ribosomal subunit protein bL20c from Prototheca wickerhamii.